The primary structure comprises 269 residues: 3-methyl-2-oxobutanoate hydroxymethyltransferase (269 aa).

Positions 43 and 82 each coordinate Mg(2+). 3-methyl-2-oxobutanoate contacts are provided by residues aspartate 43 to serine 44, aspartate 82, and lysine 110. Glutamate 112 lines the Mg(2+) pocket. Glutamate 179 functions as the Proton acceptor in the catalytic mechanism.

The protein belongs to the PanB family. As to quaternary structure, homodecamer; pentamer of dimers. Mg(2+) serves as cofactor.

The protein localises to the cytoplasm. It carries out the reaction 3-methyl-2-oxobutanoate + (6R)-5,10-methylene-5,6,7,8-tetrahydrofolate + H2O = 2-dehydropantoate + (6S)-5,6,7,8-tetrahydrofolate. The protein operates within cofactor biosynthesis; (R)-pantothenate biosynthesis; (R)-pantoate from 3-methyl-2-oxobutanoate: step 1/2. Functionally, catalyzes the reversible reaction in which hydroxymethyl group from 5,10-methylenetetrahydrofolate is transferred onto alpha-ketoisovalerate to form ketopantoate. This Acinetobacter baumannii (strain SDF) protein is 3-methyl-2-oxobutanoate hydroxymethyltransferase.